Consider the following 389-residue polypeptide: Chalcone synthase 4 (389 aa).

The active site involves cysteine 164.

This sequence belongs to the thiolase-like superfamily. Chalcone/stilbene synthases family.

It carries out the reaction (E)-4-coumaroyl-CoA + 3 malonyl-CoA + 3 H(+) = 2',4,4',6'-tetrahydroxychalcone + 3 CO2 + 4 CoA. It participates in secondary metabolite biosynthesis; flavonoid biosynthesis. Its function is as follows. The primary product of this enzyme is 4,2',4',6'-tetrahydroxychalcone (also termed naringenin-chalcone or chalcone) which can under specific conditions spontaneously isomerize into naringenin. This chain is Chalcone synthase 4 (CHS4), found in Pisum sativum (Garden pea).